The primary structure comprises 74 residues: ATP synthase subunit c (74 aa).

Helical transmembrane passes span 8–28 and 52–72; these read FIGIGFMAIGMYGAALGVSNI and IGAGLAEAMGLFSFVIAMLLI.

It belongs to the ATPase C chain family. F-type ATPases have 2 components, F(1) - the catalytic core - and F(0) - the membrane proton channel. F(1) has five subunits: alpha(3), beta(3), gamma(1), delta(1), epsilon(1). F(0) has three main subunits: a(1), b(2) and c(10-14). The alpha and beta chains form an alternating ring which encloses part of the gamma chain. F(1) is attached to F(0) by a central stalk formed by the gamma and epsilon chains, while a peripheral stalk is formed by the delta and b chains.

It is found in the cell inner membrane. In terms of biological role, f(1)F(0) ATP synthase produces ATP from ADP in the presence of a proton or sodium gradient. F-type ATPases consist of two structural domains, F(1) containing the extramembraneous catalytic core and F(0) containing the membrane proton channel, linked together by a central stalk and a peripheral stalk. During catalysis, ATP synthesis in the catalytic domain of F(1) is coupled via a rotary mechanism of the central stalk subunits to proton translocation. Functionally, key component of the F(0) channel; it plays a direct role in translocation across the membrane. A homomeric c-ring of between 10-14 subunits forms the central stalk rotor element with the F(1) delta and epsilon subunits. The protein is ATP synthase subunit c of Rickettsia prowazekii (strain Madrid E).